Consider the following 168-residue polypeptide: WAP four-disulfide core domain protein 2 (168 aa).

A signal peptide spans 1 to 30; that stretch reads MPACRLCLLATGLLLGLLLFTPLSATGTRA. WAP domains are found at residues 31–74 and 119–167; these read EKPG…SKPN and NGEK…TTPK. Disulfide bonds link cysteine 36–cysteine 62, cysteine 45–cysteine 66, cysteine 49–cysteine 61, and cysteine 55–cysteine 70. Residues 100-123 form a disordered region; the sequence is PLSRGQVSTKPPVVTKEGGNGEKQ. 4 disulfide bridges follow: cysteine 126–cysteine 154, cysteine 137–cysteine 158, cysteine 141–cysteine 153, and cysteine 147–cysteine 163.

Homotrimer; disulfide-linked.

The protein localises to the secreted. Functionally, broad range protease inhibitor. The sequence is that of WAP four-disulfide core domain protein 2 (Wfdc2) from Rattus norvegicus (Rat).